The primary structure comprises 316 residues: Rhomboid-related protein 4 (316 aa).

Over 1-21 the chain is Cytoplasmic; it reads MQRRTRGIDTGLLLLLSQVFH. The helical transmembrane segment at 22-42 threads the bilayer; sequence IGINNIPPVTLATLAVNVWFF. Residues 43–103 are Extracellular-facing; that stretch reads LNPWKPLYHS…KLEKRLGSRW (61 aa). A helical membrane pass occupies residues 104 to 124; it reads FAYIIATFSLLTGVVYLLLQF. The Cytoplasmic segment spans residues 125–137; that stretch reads ASAELMNQPDFKR. The helical transmembrane segment at 138-154 threads the bilayer; sequence NCAVGFSGVLFALKVLS. Serine 144 functions as the Nucleophile in the catalytic mechanism. The Extracellular portion of the chain corresponds to 155–182; sequence NHYCPGGFVNILGFPVPNRFACWAELAA. The chain crosses the membrane as a helical span at residues 183-203; the sequence is IHFCTPGTSFAGHLAGILVGL. Histidine 195 is a catalytic residue. Topologically, residues 204–316 are cytoplasmic; the sequence is MYTQGPLKKI…RQRLHRFDGQ (113 aa). The segment at 269 to 284 is ubiquitin-binding domain (UBD); that stretch reads SEEEQLERALRASIWD. Residues 301-316 are VCP/p97-interacting motif (VIM); it reads PEEEMRRQRLHRFDGQ.

It belongs to the peptidase S54 family. Interacts with BIK and STEAP3. Interacts (via C-terminal domain) with VCP. Interacts with ubiquitin and ubiquitinated proteins. In terms of tissue distribution, expressed in intestine, lung, brain, kidney, epididymis and testis.

The protein localises to the endoplasmic reticulum membrane. Its subcellular location is the mitochondrion membrane. The enzyme catalyses Cleaves type-1 transmembrane domains using a catalytic dyad composed of serine and histidine that are contributed by different transmembrane domains.. Inhibited by aprotinin. Its function is as follows. Intramembrane-cleaving serine protease that cleaves single transmembrane or multi-pass membrane proteins in the hydrophobic plane of the membrane, luminal loops and juxtamembrane regions. Involved in regulated intramembrane proteolysis and the subsequent release of functional polypeptides from their membrane anchors. Functional component of endoplasmic reticulum-associated degradation (ERAD) for misfolded membrane proteins. Required for the degradation process of some specific misfolded endoplasmic reticulum (ER) luminal proteins. Participates in the transfer of misfolded proteins from the ER to the cytosol, where they are destroyed by the proteasome in a ubiquitin-dependent manner. Functions in BIK, MPZ, PKD1, PTCRA, RHO, STEAP3 and TRAC processing. Involved in the regulation of exosomal secretion; inhibits the TSAP6-mediated secretion pathway. Involved in the regulation of apoptosis; modulates BIK-mediated apoptotic activity. Also plays a role in the regulation of spermatogenesis; inhibits apoptotic activity in spermatogonia. This chain is Rhomboid-related protein 4 (Rhbdd1), found in Rattus norvegicus (Rat).